The primary structure comprises 340 residues: Fructose-1,6-bisphosphatase class 1 (340 aa).

Positions 107, 126, 128, and 129 each coordinate Mg(2+). Asn-215 serves as a coordination point for substrate. Residue Glu-287 coordinates Mg(2+).

The protein belongs to the FBPase class 1 family. Homotetramer. It depends on Mg(2+) as a cofactor.

Its subcellular location is the cytoplasm. The enzyme catalyses beta-D-fructose 1,6-bisphosphate + H2O = beta-D-fructose 6-phosphate + phosphate. It functions in the pathway carbohydrate biosynthesis; gluconeogenesis. The protein is Fructose-1,6-bisphosphatase class 1 of Brucella ovis (strain ATCC 25840 / 63/290 / NCTC 10512).